The following is a 77-amino-acid chain: Small ribosomal subunit protein bS16 (77 aa).

This sequence belongs to the bacterial ribosomal protein bS16 family.

This Helicobacter hepaticus (strain ATCC 51449 / 3B1) protein is Small ribosomal subunit protein bS16.